An 834-amino-acid polypeptide reads, in one-letter code: Striatin-interacting protein 2 (834 aa).

Positions 1 to 48 (MEDPAAPGTGGPPANGNGNGGGKGKQAAPKGREAFRSQRRESEGSVDC) are disordered. The segment covering 8–24 (GTGGPPANGNGNGGGKG) has biased composition (gly residues). Positions 30–43 (KGREAFRSQRRESE) are enriched in basic and acidic residues. 3 positions are modified to phosphoserine: Ser-318, Ser-329, and Ser-354. Positions 321-345 (SYTLDLGESQLAPPPSKLRGRRGSR) are disordered. Positions 360 to 382 (ERDLFKTEEPATEEEEESAGDGE) are disordered. The span at 369–379 (PATEEEEESAG) shows a compositional bias: acidic residues.

The protein belongs to the STRIP family. In terms of assembly, part of the core of STRIPAK complexes composed of PP2A catalytic and scaffolding subunits, the striatins (PP2A regulatory subunits), the striatin-associated proteins MOB4, STRIP1 and STRIP2, PDCD10 and members of the STE20 kinases, such as STK24 and STK26. Interacts with CTTNBP2NL.

The protein localises to the cytoplasm. Plays a role in the regulation of cell morphology and cytoskeletal organization. Required in the control of cell shape. Calmodulin-binding scaffolding protein which is the center of the striatin-interacting phosphatase and kinase (STRIPAK) complexes. STRIPAK complexes have critical roles in protein (de)phosphorylation and are regulators of multiple signaling pathways including Hippo, MAPK, nuclear receptor and cytoskeleton remodeling. Different types of STRIPAK complexes are involved in a variety of biological processes such as cell growth, differentiation, apoptosis, metabolism and immune regulation. The chain is Striatin-interacting protein 2 from Homo sapiens (Human).